Consider the following 359-residue polypeptide: Non-functional pseudokinase ZRK2 (359 aa).

The span at 1 to 10 shows a compositional bias: basic residues; sequence MKSMVKKLKQ. The segment at 1 to 20 is disordered; the sequence is MKSMVKKLKQSLRSGSLEKR. The Protein kinase domain maps to 64-356; sequence LKATSNFGSS…KELKQIETLF (293 aa). ATP contacts are provided by residues 70 to 78 and lysine 97; that span reads FGSSCFVTA.

It belongs to the protein kinase superfamily. Ser/Thr protein kinase family. ZRK subfamily.

The chain is Non-functional pseudokinase ZRK2 from Arabidopsis thaliana (Mouse-ear cress).